Here is a 740-residue protein sequence, read N- to C-terminus: MARIVAANDDDSMELNTISSIHDSTLGQLLKNVSDVRKMAIGDETPVHESLNQDYNDGYMRTVPFVLSFDNLTYNVSVRPKLDFRNLFPRRRTEDPEIAQTARPKTKTLLNNISGETRDGEIMAVLGASGSGKSTLIDALANRIAKGSLKGTVKLNGETLQSRMLKVISAYVMQDDLLFPMLTVEETLMFAAEFRLPRSLPKSKKKLRVQALIDQLGIRNAAKTIIGDEGHRGISGGERRRVSIGIDIIHDPILLFLDEPTSGLDSTSAFMVVKVLKRIAQSGSIVIMSIHQPSHRVLGLLDRLIFLSRGHTVYSGSPASLPRFFTEFGSPIPENENRTEFALDLIRELEGSAGGTRGLIEFNKKWQEMKKQSNRQPPLTPPSSPYPNLTLKEAIAASISRGKLVSGGESVAHGGATTNTTTLAVPAFANPMWIEIKTLSKRSMLNSRRQPELFGIRIASVVITGFILATVFWRLDNSPKGVQERLGFFAFAMSTMFYTCADALPVFLQERYIFMRETAYNAYRRSSYVLSHAIVSFPSLIFLSVAFAATTYWAVGLDGGLTGLLFYCLIILASFWSGSSFVTFLSGVVPSVMLGYTIVVAILAYFLLFSGFFINRNRIPDYWIWFHYMSLVKYPYEAVLQNEFSDATKCFVRGVQIFDNTPLGELPEVMKLKLLGTVSKSLGVTISSTTCLTTGSDILRQQGVVQLSKWNCLFITVAFGFFFRILFYFTLLLGSKNKRR.

One can recognise an ABC transporter domain in the interval 82–334 (LDFRNLFPRR…FTEFGSPIPE (253 aa)). Residue 127-134 (GASGSGKS) participates in ATP binding. The ABC transmembrane type-2 domain occupies 434 to 644 (IEIKTLSKRS…PYEAVLQNEF (211 aa)). 6 helical membrane passes run 453-473 (LFGIRIASVVITGFILATVFW), 488-508 (FFAFAMSTMFYTCADALPVFL), 529-549 (VLSHAIVSFPSLIFLSVAFAA), 563-585 (GLLFYCLIILASFWSGSSFVTFL), 594-614 (LGYTIVVAILAYFLLFSGFFI), and 713-733 (LFITVAFGFFFRILFYFTLLL).

The protein belongs to the ABC transporter superfamily. ABCG family. Eye pigment precursor importer (TC 3.A.1.204) subfamily.

The protein resides in the membrane. This is ABC transporter G family member 1 (ABCG1) from Arabidopsis thaliana (Mouse-ear cress).